Here is a 361-residue protein sequence, read N- to C-terminus: uncharacterized protein (361 aa).

41–48 (GPLNSGKT) serves as a coordination point for ATP.

The protein belongs to the archaeal ATPase family.

This is an uncharacterized protein from Methanocaldococcus jannaschii (strain ATCC 43067 / DSM 2661 / JAL-1 / JCM 10045 / NBRC 100440) (Methanococcus jannaschii).